A 237-amino-acid chain; its full sequence is Terpene cyclase spyD (237 aa).

Helical transmembrane passes span 17–37 (IYNV…IVTV), 47–67 (AIPL…VLVY), 71–91 (YLLF…IVYG), 109–129 (HLPL…YALA), 138–158 (IHGG…CQLL), 167–187 (SWTM…GEFL), and 206–226 (WCTG…WYMG).

The protein belongs to the paxB family.

Its subcellular location is the membrane. The enzyme catalyses (S)-(2E,6E,10E)-epoxygeranylgeranyl-triacetate lactone = sartorypyrone F. The catalysed reaction is (S)-(2E,6E,10E)-epoxygeranylgeranyl-triacetate lactone = sartorypyrone D. It functions in the pathway secondary metabolite biosynthesis; terpenoid biosynthesis. Its function is as follows. Terpene cyclase; part of the gene cluster that mediates the biosynthesis of meroterpenoids called sartorypyrones. Within the pathway, spyD catalyzes the cyclization of epoxygeranylgeranyl-triacetate lactone. SpyD exhibits promiscuous activity, resulting in the formation of bicyclic sartorypyrone F and monocyclic sartorypyrone D. The biosynthesis of sartorypyrones begins with the production of triacetic acid lactone (TAL) by the NR-PKS spyA using one molecule of acetyl-CoA and two molecules of malonyl-CoA. The prenyltransferase spyF then conjugates geranylgeranyl pyrophosphate (GGPP) to TAL to form geranylgeranyl-triacetate lactone, for which the pathway-specific geranylgeranyl pyrophosphate synthase (GGPS) spyE is required to provide GGPP. Subsequently, geranylgeranyl-triacetate lactone is epoxidized at the terminal olein by the FAD-dependent monooxygenase spyC, followed by cyclization of the terpenoid component catalyzed by the terpene cyclase spyD to produce both the bicyclic sartorypyrone F and the monocyclic sartorypyrone D. Finally, the last step of the biosynthesis involves the acetylation of the meroterpenoids sartorypyrones D and F by the acetyltransferase SpyB to produce sartorypyrones A and G, respectively. This chain is Terpene cyclase spyD, found in Aspergillus fumigatus (strain ATCC MYA-4609 / CBS 101355 / FGSC A1100 / Af293) (Neosartorya fumigata).